Reading from the N-terminus, the 119-residue chain is Large ribosomal subunit protein bL20 (119 aa).

Belongs to the bacterial ribosomal protein bL20 family.

Binds directly to 23S ribosomal RNA and is necessary for the in vitro assembly process of the 50S ribosomal subunit. It is not involved in the protein synthesizing functions of that subunit. The polypeptide is Large ribosomal subunit protein bL20 (Teredinibacter turnerae (strain ATCC 39867 / T7901)).